A 112-amino-acid polypeptide reads, in one-letter code: UPF0329 protein ECU11_0080 (112 aa).

It belongs to the UPF0329 family.

The chain is UPF0329 protein ECU11_0080 from Encephalitozoon cuniculi (strain GB-M1) (Microsporidian parasite).